Here is a 346-residue protein sequence, read N- to C-terminus: fMet-Leu-Phe receptor (346 aa).

2 N-linked (GlcNAc...) asparagine glycosylation sites follow: asparagine 1 and asparagine 7. The Extracellular portion of the chain corresponds to asparagine 1–isoleucine 24. A helical transmembrane segment spans residues valine 25–valine 47. The Cytoplasmic portion of the chain corresponds to alanine 48 to threonine 58. A helical transmembrane segment spans residues isoleucine 59–valine 80. Topologically, residues lysine 81–phenylalanine 97 are extracellular. An intrachain disulfide couples cysteine 95 to cysteine 173. Residues isoleucine 98 to leucine 118 traverse the membrane as a helical segment. Over aspartate 119 to serine 137 the chain is Cytoplasmic. Residues leucine 138 to isoleucine 159 form a helical membrane-spanning segment. Residues arginine 160–arginine 202 lie on the Extracellular side of the membrane. Residues phenylalanine 203–threonine 223 traverse the membrane as a helical segment. The Cytoplasmic portion of the chain corresponds to lysine 224–valine 239. The helical transmembrane segment at leucine 240–valine 263 threads the bilayer. At arginine 264–valine 282 the chain is on the extracellular side. The helical transmembrane segment at threonine 283–glycine 302 threads the bilayer. Topologically, residues glutamine 303–alanine 346 are cytoplasmic. The segment at threonine 322–alanine 346 is disordered. Residues glutamate 323 to proline 338 are compositionally biased toward polar residues.

It belongs to the G-protein coupled receptor 1 family. Post-translationally, phosphorylated; which is necessary for desensitization.

The protein localises to the cell membrane. Functionally, high affinity receptor for N-formyl-methionyl peptides (fMLP), which are powerful neutrophil chemotactic factors. Binding of fMLP to the receptor stimulates intracellular calcium mobilization and superoxide anion release. This response is mediated via a G-protein that activates a phosphatidylinositol-calcium second messenger system. Receptor for TAFA4, mediates its effects on chemoattracting macrophages, promoting phagocytosis and increasing ROS release. Receptor for cathepsin CTSG, leading to increased phagocyte chemotaxis. The polypeptide is fMet-Leu-Phe receptor (FPR1) (Gorilla gorilla gorilla (Western lowland gorilla)).